The sequence spans 459 residues: MALTLFDTDEYRPPVWKSYLYQLQQEAPHPRRVTCTCEVENRPKYYGREYHGMISREETDQLLSVAEGSYLIRESQRQPGTYTLALRFGSQTRNFRLYYDGKHFVGEKRFESIHDLVTDGLITLYIETKAAEYIAKMTINPIYEHIGYTTLNREPAYKQHMAVLKETHDEKEATGQDGVSEKRLTSLVRRATLKENEQIPKYEKVHNFKVHTFRGPHWCEYCANFMWGLIAQGVKCADCGLNVHKQCSKMVPNDCKPDLKHVKKVYSCDLTTLVKAHITKRPMVVDMCIREIESRGLNSEGLYRVSGFSDLIEDVKMAFDRDGEKADISVNMYEDINIITGALKLYFRDLPIPLITYDAYPKFIESAKIMDPDEQLETLHEALRSLPPAHCETLRYLMAHLKRVTLHEKENLMSAENLGIVFGPTLMRSPELDPMAALNDIRYQRLVVELLIKNEDILF.

N-acetylalanine is present on Ala-2. In terms of domain architecture, SH2 spans 49 to 135 (EYHGMISREE…IETKAAEYIA (87 aa)). The residue at position 192 (Thr-192) is a Phosphothreonine. The Phorbol-ester/DAG-type zinc finger occupies 205-255 (VHNFKVHTFRGPHWCEYCANFMWGLIAQGVKCADCGLNVHKQCSKMVPNDC). One can recognise a Rho-GAP domain in the interval 268 to 459 (CDLTTLVKAH…LLIKNEDILF (192 aa)). Thr-340 is modified (phosphothreonine).

In terms of assembly, interacts with EPHA4; effector of EPHA4 in axon guidance linking EPHA4 activation to RAC1 regulation. May also interact with EPHB1 and EPHB2. In terms of processing, phosphorylated. Phosphorylation is EPHA4 kinase activity-dependent.

In terms of biological role, GTPase-activating protein for p21-rac and a phorbol ester receptor. May play an important role in neuronal signal-transduction mechanisms. Involved in the assembly of neuronal locomotor circuits as a direct effector of EPHA4 in axon guidance. The polypeptide is N-chimaerin (Chn1) (Mus musculus (Mouse)).